We begin with the raw amino-acid sequence, 194 residues long: Adenylate kinase (194 aa).

ATP is bound at residue 10 to 15 (GAGKGT). Positions 30–59 (STGDMLRAAVAQQSEIGKRAKAVMDAGQLV) are NMP. AMP-binding positions include Thr-31, Arg-36, 57-59 (QLV), 85-88 (GYPR), and Gln-92. Residues 126–142 (SRVAETIAKGAQVRSDD) are LID. Residue Arg-127 coordinates ATP. Arg-139 and Arg-150 together coordinate AMP. Ala-178 contributes to the ATP binding site.

It belongs to the adenylate kinase family. In terms of assembly, monomer.

It is found in the cytoplasm. It catalyses the reaction AMP + ATP = 2 ADP. It participates in purine metabolism; AMP biosynthesis via salvage pathway; AMP from ADP: step 1/1. Functionally, catalyzes the reversible transfer of the terminal phosphate group between ATP and AMP. Plays an important role in cellular energy homeostasis and in adenine nucleotide metabolism. The chain is Adenylate kinase from Brucella melitensis biotype 1 (strain ATCC 23456 / CCUG 17765 / NCTC 10094 / 16M).